Reading from the N-terminus, the 278-residue chain is 3-methyl-2-oxobutanoate hydroxymethyltransferase 1 (278 aa).

Mg(2+) contacts are provided by Asp-49 and Asp-88. 3-methyl-2-oxobutanoate contacts are provided by residues 49-50 (DS), Asp-88, and Lys-118. Glu-120 provides a ligand contact to Mg(2+). The active-site Proton acceptor is Glu-187.

It belongs to the PanB family. As to quaternary structure, homodecamer; pentamer of dimers. Requires Mg(2+) as cofactor.

The protein resides in the cytoplasm. It carries out the reaction 3-methyl-2-oxobutanoate + (6R)-5,10-methylene-5,6,7,8-tetrahydrofolate + H2O = 2-dehydropantoate + (6S)-5,6,7,8-tetrahydrofolate. It participates in cofactor biosynthesis; (R)-pantothenate biosynthesis; (R)-pantoate from 3-methyl-2-oxobutanoate: step 1/2. Catalyzes the reversible reaction in which hydroxymethyl group from 5,10-methylenetetrahydrofolate is transferred onto alpha-ketoisovalerate to form ketopantoate. This Hahella chejuensis (strain KCTC 2396) protein is 3-methyl-2-oxobutanoate hydroxymethyltransferase 1.